A 128-amino-acid polypeptide reads, in one-letter code: Small ribosomal subunit protein uS9c (128 aa).

This sequence belongs to the universal ribosomal protein uS9 family.

It localises to the plastid. This chain is Small ribosomal subunit protein uS9c (rps9), found in Euglena longa (Euglenophycean alga).